The sequence spans 379 residues: MKFALLSGVAAGLLPVVSAVSVSGAAEGFAKGVTGGGSAAAVYPTTTDELVSYLGDSSPRVIVLDRTFDFTGTEGTTTATGCAPWGTAAACQLAINQNDWCTNYQPDAPSVSVTYDNAGILGITVASDKTILGSGSSGVIKGKGLRIVSGASNIIIQNIAITDLNPKYVWGGDAITLNDADMVWIDHVTTARIGRQHLVLGNDADNRVTVSNSYFNGVSDYSATCDGYAYWGIYFAGSSDLITFKGNYIHHFSGRSPKVQENTLLHAVNNYWYDSTGHAFEIGAGGYVLAEGNVFQNIDTPVQSPIEGQLFTSPDTNTNTVCATYLGRNCEVNGFGSSGTFSQADTAFLVNFEGKNIASASPYADAQSSVPSSAGQGNL.

The N-terminal stretch at 1 to 19 is a signal peptide; sequence MKFALLSGVAAGLLPVVSA. Disulfide bonds link Cys82/Cys101 and Cys91/Cys225. Residue Arg255 is part of the active site. Cys322 and Cys330 form a disulfide bridge.

It belongs to the polysaccharide lyase 1 family.

The protein resides in the secreted. The enzyme catalyses Eliminative cleavage of (1-&gt;4)-alpha-D-galacturonan methyl ester to give oligosaccharides with 4-deoxy-6-O-methyl-alpha-D-galact-4-enuronosyl groups at their non-reducing ends.. Functionally, pectinolytic enzymes consist of four classes of enzymes: pectin lyase, polygalacturonase, pectin methylesterase and rhamnogalacturonase. Among pectinolytic enzymes, pectin lyase is the most important in depolymerization of pectin, since it cleaves internal glycosidic bonds of highly methylated pectins. The polypeptide is Probable pectin lyase A (pelA) (Aspergillus oryzae (strain ATCC 42149 / RIB 40) (Yellow koji mold)).